The chain runs to 255 residues: 3-deoxy-manno-octulosonate cytidylyltransferase (255 aa).

This sequence belongs to the KdsB family.

Its subcellular location is the cytoplasm. The catalysed reaction is 3-deoxy-alpha-D-manno-oct-2-ulosonate + CTP = CMP-3-deoxy-beta-D-manno-octulosonate + diphosphate. The protein operates within nucleotide-sugar biosynthesis; CMP-3-deoxy-D-manno-octulosonate biosynthesis; CMP-3-deoxy-D-manno-octulosonate from 3-deoxy-D-manno-octulosonate and CTP: step 1/1. It participates in bacterial outer membrane biogenesis; lipopolysaccharide biosynthesis. Functionally, activates KDO (a required 8-carbon sugar) for incorporation into bacterial lipopolysaccharide in Gram-negative bacteria. In Hahella chejuensis (strain KCTC 2396), this protein is 3-deoxy-manno-octulosonate cytidylyltransferase.